The chain runs to 198 residues: Inner membrane-spanning protein YciB (198 aa).

The next 5 membrane-spanning stretches (helical) occupy residues 36–56, 67–87, 90–110, 133–153, and 162–182; these read IFSA…ILYL, LTLV…SETF, WKAP…HFIG, LNIA…YVAF, and FKVF…GIYL.

This sequence belongs to the YciB family.

The protein localises to the cell inner membrane. Functionally, plays a role in cell envelope biogenesis, maintenance of cell envelope integrity and membrane homeostasis. This is Inner membrane-spanning protein YciB from Pseudomonas savastanoi pv. phaseolicola (strain 1448A / Race 6) (Pseudomonas syringae pv. phaseolicola (strain 1448A / Race 6)).